The sequence spans 607 residues: MPYELKKVFASLPQMERGVAKILAGDPKGNNFLYTNGKSVIIRNIDNPAIADIYTEHAHQAVVARYAPSGFYIASGDTSGKLRIWDTTQKEHLLKYEYQPFAGKIKDIAWTEDSKRIAVVGEGREKFASVFLWDTGSSVGEITGNIKVINSVDIKQTRPYRLVTGSDDNCCAFLEGPPFKFKFTMSDHSRFVNCVRFSPDGSKLASAGADGQIFLYDGKTGEKVCSLGGSKAHDGGIYAVSWSPDGTQLLSASGDKTTKIWDVAANSAVTTFNLGSDVLDQQLGCLWQKDYLLSVSLSGYINYLDKNNPARPLRVIKGHNKSIQCMTVNNSDGRSTIYTGSHDGHINYWDAETGENDTFTGKGHTNQVSSMDLDGCNQLITCSMDDTLRYTSLISKDYSSSESVKMDVQPKCVAVGSGGYVVTVCIGQIVLLKDKKKVFAIDSLDYEPEAVAIHKGSGTVAVGGADGKVHLYSIQGNSLKDEGKTLPAKGAVTDLAYSHDGAFLAVTDANKVVTVFSVADGYSEKNSYYGHHAKALSVAWSPDNEHFASSGMDMMVYVWTLSDPDTRIKMPDAHRLHHVSSLAWLDEHTLATVSHDACVKQWTVTFK.

WD repeat units follow at residues glutamate 4–isoleucine 45, proline 48–threonine 87, leucine 93–threonine 135, serine 138–glycine 176, lysine 180–glycine 218, valine 224–valine 263, threonine 270–lysine 306, arginine 311–alanine 351, threonine 358–valine 408, leucine 432–isoleucine 474, lysine 480–valine 518, serine 523–leucine 561, and threonine 566–valine 604.

The protein belongs to the WD repeat AIP1 family.

It localises to the cell membrane. The protein resides in the cytoplasm. The protein localises to the cytoskeleton. It is found in the nucleus. In terms of biological role, induces disassembly of actin filaments in conjunction with ADF/cofilin family proteins. Doesn't sever actin filaments alone, but caps the barbed ends of filaments severed by cofilin, which blocks annealing and depolymerization and allows more extensive severing by cofilin. This chain is WD repeat-containing protein 1-A (wdr1-a), found in Xenopus laevis (African clawed frog).